Consider the following 1370-residue polypeptide: Histidine kinase P4 (1370 aa).

The first 20 residues, Met-1–Lys-20, serve as a signal peptide directing secretion. A helical membrane pass occupies residues Trp-799 to Leu-819. The region spanning Asn-852–Arg-1072 is the Histidine kinase domain. A Phosphohistidine; by autocatalysis modification is found at His-855. A Response regulatory domain is found at Thr-1119–Leu-1234. Asp-1167 carries the 4-aspartylphosphate modification. Positions Lys-1266–Arg-1365 constitute an HTH araC/xylS-type domain. 2 DNA-binding regions (H-T-H motif) span residues Leu-1284 to Thr-1305 and Ile-1332 to Phe-1355.

Post-translationally, autophosphorylated. Activation requires a sequential transfer of a phosphate group from a His in the primary transmitter domain, to an Asp in the receiver domain and to a His in the secondary transmitter domain.

Its subcellular location is the membrane. It localises to the cell surface. The enzyme catalyses ATP + protein L-histidine = ADP + protein N-phospho-L-histidine.. Its function is as follows. Histidine kinase probably involved in ulvan degradation. Ulvan is the main polysaccharide component of the Ulvales (green seaweed) cell wall. It is composed of disaccharide building blocks comprising 3-sulfated rhamnose (Rha3S) linked to D-glucuronic acid (GlcA), L-iduronic acid (IduA), or D-xylose (Xyl). The polypeptide is Histidine kinase P4 (Formosa agariphila (strain DSM 15362 / KCTC 12365 / LMG 23005 / KMM 3901 / M-2Alg 35-1)).